The chain runs to 101 residues: CRISPR-associated endoribonuclease Cas2 (101 aa).

Asp17 contributes to the Mg(2+) binding site.

It belongs to the CRISPR-associated endoribonuclease Cas2 protein family. Homodimer, forms a heterotetramer with a Cas1 homodimer. It depends on Mg(2+) as a cofactor.

In terms of biological role, CRISPR (clustered regularly interspaced short palindromic repeat), is an adaptive immune system that provides protection against mobile genetic elements (viruses, transposable elements and conjugative plasmids). CRISPR clusters contain sequences complementary to antecedent mobile elements and target invading nucleic acids. CRISPR clusters are transcribed and processed into CRISPR RNA (crRNA). Functions as a ssRNA-specific endoribonuclease. Involved in the integration of spacer DNA into the CRISPR cassette. This is CRISPR-associated endoribonuclease Cas2 from Methanopyrus kandleri (strain AV19 / DSM 6324 / JCM 9639 / NBRC 100938).